The primary structure comprises 122 residues: MIINESYLNVADNSGAKLLRVIRVMGGSRRKWGTVGDIVVCSVRDAVPNGDLKKGDVVKAVIVRTKKEIRRPDGSYIRFDDNAAVVLDKYNEPKGTRVFGPVAKELREKGFMKIVSLAPEVF.

It belongs to the universal ribosomal protein uL14 family. Part of the 50S ribosomal subunit. Forms a cluster with proteins L3 and L19. In the 70S ribosome, L14 and L19 interact and together make contacts with the 16S rRNA in bridges B5 and B8.

In terms of biological role, binds to 23S rRNA. Forms part of two intersubunit bridges in the 70S ribosome. The sequence is that of Large ribosomal subunit protein uL14 from Thermosipho melanesiensis (strain DSM 12029 / CIP 104789 / BI429).